Consider the following 475-residue polypeptide: Siroheme synthase (475 aa).

Residues 1 to 204 form a precorrin-2 dehydrogenase /sirohydrochlorin ferrochelatase region; sequence MDYLPVFLNI…GRDQAAQDYL (204 aa). NAD(+) contacts are provided by residues 22–23 and 43–44; these read EI and PA. A Phosphoserine modification is found at Ser129. The interval 218–475 is uroporphyrinogen-III C-methyltransferase; it reads GEVYLVGAGP…MGTSSGPGYP (258 aa). An S-adenosyl-L-methionine-binding site is contributed by Pro227. Residue Asp250 is the Proton acceptor of the active site. Lys272 (proton donor) is an active-site residue. S-adenosyl-L-methionine is bound by residues 303–305, Ile308, 333–334, Met385, and Gly414; these read GGD and TA.

In the N-terminal section; belongs to the precorrin-2 dehydrogenase / sirohydrochlorin ferrochelatase family. It in the C-terminal section; belongs to the precorrin methyltransferase family.

It catalyses the reaction uroporphyrinogen III + 2 S-adenosyl-L-methionine = precorrin-2 + 2 S-adenosyl-L-homocysteine + H(+). The catalysed reaction is precorrin-2 + NAD(+) = sirohydrochlorin + NADH + 2 H(+). It carries out the reaction siroheme + 2 H(+) = sirohydrochlorin + Fe(2+). The protein operates within cofactor biosynthesis; adenosylcobalamin biosynthesis; precorrin-2 from uroporphyrinogen III: step 1/1. It participates in cofactor biosynthesis; adenosylcobalamin biosynthesis; sirohydrochlorin from precorrin-2: step 1/1. Its pathway is porphyrin-containing compound metabolism; siroheme biosynthesis; precorrin-2 from uroporphyrinogen III: step 1/1. It functions in the pathway porphyrin-containing compound metabolism; siroheme biosynthesis; siroheme from sirohydrochlorin: step 1/1. The protein operates within porphyrin-containing compound metabolism; siroheme biosynthesis; sirohydrochlorin from precorrin-2: step 1/1. Multifunctional enzyme that catalyzes the SAM-dependent methylations of uroporphyrinogen III at position C-2 and C-7 to form precorrin-2 via precorrin-1. Then it catalyzes the NAD-dependent ring dehydrogenation of precorrin-2 to yield sirohydrochlorin. Finally, it catalyzes the ferrochelation of sirohydrochlorin to yield siroheme. In Nitrosomonas europaea (strain ATCC 19718 / CIP 103999 / KCTC 2705 / NBRC 14298), this protein is Siroheme synthase.